The following is a 325-amino-acid chain: MARPVSDRTPAPLLLGGPAGTPPGGGALLGLRSLLQGTSKPKEPASCLLKEKERKAALPAATTPGPGLETAGPADAPAGAVVGGGSPRGRPGPVPAPGLLAPLLWERTLPFGDVEYVDLDAFLLEHGLPPSPPPPGGPSPEPSPARTPAPSPGPGSCGSASPRSSPGHAPARAALGTASGHRAGLTSRDTPSPVDPDTVEVLMTFEPDPADLALSSIPGHETFDPRRHRFSEEELKPQPIMKKARKIQVPEEQKDEKYWSRRYKNNEAAKRSRDARRLKENQISVRAAFLEKENALLRQEVVAVRQELSHYRAVLSRYQAQHGAL.

Disordered regions lie at residues 1–99, 127–200, and 229–255; these read MARP…APGL, GLPP…DTVE, and RFSEEELKPQPIMKKARKIQVPEEQKD. Residues 17–28 show a composition bias toward gly residues; sequence GPAGTPPGGGAL. 2 stretches are compositionally biased toward low complexity: residues 29 to 38 and 57 to 80; these read LGLRSLLQGT and ALPAATTPGPGLETAGPADAPAGA. At Ser-86 the chain carries Phosphoserine. Over residues 129-153 the composition is skewed to pro residues; that stretch reads PPSPPPPGGPSPEPSPARTPAPSPG. Positions 157-167 are enriched in low complexity; it reads CGSASPRSSPG. The region spanning 255 to 318 is the bZIP domain; sequence DEKYWSRRYK…SHYRAVLSRY (64 aa). Positions 257–279 are basic motif; sequence KYWSRRYKNNEAAKRSRDARRLK. Residues 283–297 are leucine-zipper; that stretch reads ISVRAAFLEKENALL.

This sequence belongs to the bZIP family. PAR subfamily. As to quaternary structure, binds DNA as a homodimer or a heterodimer. Can form a heterodimer with TEF. As to expression, ubiquitously expressed. Expressed in the suprachiasmatic nuclei (SCN) and in most peripheral tissues, with a strong circadian rhythmicity.

Its subcellular location is the nucleus. In terms of biological role, this transcriptional activator recognizes and binds to the sequence 5'-RTTAYGTAAY-3' found in the promoter of genes such as albumin, CYP2A4 and CYP2A5. It is not essential for circadian rhythm generation, but modulates important clock output genes. May be a direct target for regulation by the circadian pacemaker component clock. May affect circadian period and sleep regulation. This Homo sapiens (Human) protein is D site-binding protein (DBP).